The chain runs to 530 residues: PC4 and SFRS1-interacting protein (530 aa).

Positions 1–64 constitute a PWWP domain; it reads MTRDFKPGDL…PKDIFPYSEN (64 aa). Lys-75 is covalently cross-linked (Glycyl lysine isopeptide (Lys-Gly) (interchain with G-Cter in SUMO2)). The segment at 88–349 is disordered; that stretch reads PKVKFSSQQA…VEKKRETSMD (262 aa). Residues 93 to 107 show a composition bias toward low complexity; it reads SSQQASAKQSNASSD. Phosphoserine occurs at positions 102, 105, and 106. Residues 113–135 show a composition bias toward basic and acidic residues; the sequence is KETSVSKEDTDPEEKASNEDVTK. 2 positions are modified to phosphothreonine: Thr-115 and Thr-122. Ser-129 carries the phosphoserine modification. Thr-141 bears the Phosphothreonine mark. Basic residues predominate over residues 144 to 153; sequence AARRGRKRKA. The Nuclear localization signal motif lies at 146–156; sequence RRGRKRKAEKQ. A Phosphothreonine modification is found at Thr-167. A phosphoserine mark is found at Ser-177 and Ser-206. Over residues 213-261 the composition is skewed to basic and acidic residues; that stretch reads EEDKSKKKGQEEKQPKKQLKKDEEGQKEEEKPRKEPDKKEGKKEVESKR. The residue at position 271 (Ser-271) is a Phosphoserine. Thr-272 carries the phosphothreonine modification. 2 positions are modified to phosphoserine: Ser-273 and Ser-275. Residues 274–283 are compositionally biased toward acidic residues; that stretch reads DSEEEGDDQE. The segment covering 287-302 has biased composition (basic residues); it reads KRKGGRNFQTAHRRNM. Residues 305–349 show a composition bias toward basic and acidic residues; sequence GQHEKEAADRKRKQEEQMETEQQNKDEGKKPEVKKVEKKRETSMD. Coiled-coil stretches lie at residues 306 to 334 and 371 to 395; these read QHEK…EGKK and NRCI…KHTE. The interval 340 to 417 is integrase-binding domain (IBD); it reads VEKKRETSMD…VSQVIMEKST (78 aa). Phosphoserine is present on Ser-434. The residue at position 437 (Thr-437) is a Phosphothreonine. At Ser-443 the chain carries Phosphoserine. A compositionally biased stretch (basic and acidic residues) spans 446 to 473; the sequence is EQRQHEEANKTKDQGKKGPNKKLEKEQT. Residues 446-530 are disordered; that stretch reads EQRQHEEANK…ISLKDSTLDN (85 aa). The span at 474-494 shows a compositional bias: polar residues; sequence GSKTLNGGSDAQDSNQPQHNG. A compositionally biased stretch (basic and acidic residues) spans 498–530; that stretch reads EESKDNHEASSKKKPSSEERETEISLKDSTLDN. Phosphoserine is present on Ser-514. At Arg-517 the chain carries Citrulline. A Phosphoserine modification is found at Ser-522. Thr-527 carries the phosphothreonine modification.

The protein belongs to the HDGF family. Monomer. Interacts with IFRD1/PC4. Interacts (via IBD domain) with POGZ (via IBM motif) and CDCA7L (via IBM motifs). Interacts (via IBD domain) with KMT2A (via IBM motifs) with a moderate affinity whereas interacts with the KMT2A-MEN1 complex with a greater affinity; MEN1 enhances interaction of KMT2A with PSIP1. Interacts (via IBD domain) with IWS1 (via IBM motif), MED1 (via IBM motif) and DBF4 (via IBM motifs). Post-translationally, citrullinated by PADI4.

Its subcellular location is the nucleus. Functionally, transcriptional coactivator involved in neuroepithelial stem cell differentiation and neurogenesis. Involved in particular in lens epithelial cell gene regulation and stress responses. May play an important role in lens epithelial to fiber cell terminal differentiation. May play a protective role during stress-induced apoptosis. The sequence is that of PC4 and SFRS1-interacting protein (PSIP1) from Bos taurus (Bovine).